The sequence spans 553 residues: Expansin-like protein 7 (553 aa).

The first 19 residues, 1–19 (MRLLGSLILTLSLIASAFS), serve as a signal peptide directing secretion. Asn-39 is a glycosylation site (N-linked (GlcNAc...) asparagine). One can recognise an Expansin-like EG45 domain in the interval 41–139 (SGSCEYGAYN…RKVSCDASGP (99 aa)). 2 disulfide bridges follow: Cys-44–Cys-73 and Cys-76–Cys-134. 3 N-linked (GlcNAc...) asparagine glycosylation sites follow: Asn-276, Asn-325, and Asn-406. Disordered stretches follow at residues 421–447 (GGSGASGVATSSHTGVSSSSSTASSTA) and 460–531 (SSSA…DEHH). Composition is skewed to low complexity over residues 460 to 476 (SSSASSTSVSSTTAGGK) and 484 to 493 (ISTSGITGSG). Residues 497-516 (AASTSKTTSNPTGKTTGMTG) are compositionally biased toward polar residues. Residues 520–531 (DHSESHSSDEHH) show a composition bias toward basic and acidic residues.

Belongs to the expansin family. Expansin A subfamily.

The protein localises to the secreted. In terms of biological role, may serve to lubricate the movement of the cellulose microfibrils during cell growth and wall extension and/or may serve to maintain the fluid state of the slug cell wall. Overexpression shows aberrant stalk formation. The protein is Expansin-like protein 7 (expl7) of Dictyostelium discoideum (Social amoeba).